A 548-amino-acid polypeptide reads, in one-letter code: MDSQRNLLVIALLFVSFMIWQAWEQDKNPQPQTQQTTQTTTTAAGSAADQGVPASGQGKMITVKTDVLDLTINTRGGDVEQALLPAYPKELGSNEPFQLLETTPQFIYQAQSGLTGRDGPDNPANGPRPLYNVEKDAFVLADGQNELQVPMTYTDAAGNTFTKTFVFKRGDYAVNVNYSVQNAGEKPLEVSTFGQLKQSVNLPPHRDTGSSNFALHTFRGAAYSTPDEKYEKYKFDTIADNENLNVSSKGGWVAMLQQYFATAWIPRNDGTNNFYTANLGNGIVAIGYKAQPVLVQPGQTGAMTSTLWVGPEIQDKMAAVAPHLDLTVDYGWLWFISQPLFKLLKWIHSFVGNWGFSIIIITFIVRGIMYPLTKAQYTSMAKMRMLQPKIQAMRERLGDDKQRQSQEMMALYKAEKVNPLGGCFPLIIQMPIFLALYYMLMGSIELRHAPFALWIHDLSAQDPYYILPILMGVTMFFIQKMSPTTVTDPMQQKIMTFMPVIFTVFFLWFPSGLVLYYIVSNLVTIIQQQLIYRGLEKRGLHSREKKKS.

A helical transmembrane segment spans residues 6–26 (NLLVIALLFVSFMIWQAWEQD). The tract at residues 28-56 (NPQPQTQQTTQTTTTAAGSAADQGVPASG) is disordered. Residues 29–42 (PQPQTQQTTQTTTT) are compositionally biased toward low complexity. Transmembrane regions (helical) follow at residues 350–370 (FVGN…GIMY), 424–444 (FPLI…MGSI), 458–478 (LSAQ…MFFI), and 499–519 (PVIF…YYIV).

The protein belongs to the OXA1/ALB3/YidC family. Type 1 subfamily. As to quaternary structure, interacts with the Sec translocase complex via SecD. Specifically interacts with transmembrane segments of nascent integral membrane proteins during membrane integration.

It localises to the cell inner membrane. Required for the insertion and/or proper folding and/or complex formation of integral membrane proteins into the membrane. Involved in integration of membrane proteins that insert both dependently and independently of the Sec translocase complex, as well as at least some lipoproteins. Aids folding of multispanning membrane proteins. The polypeptide is Membrane protein insertase YidC (Salmonella enteritidis PT4 (strain P125109)).